The primary structure comprises 611 residues: Aspartate--tRNA(Asp/Asn) ligase (611 aa).

Position 174 (Glu-174) interacts with L-aspartate. Positions 198–201 are aspartate; it reads QLFK. Arg-220 serves as a coordination point for L-aspartate. ATP contacts are provided by residues 220 to 222 and Gln-229; that span reads RDE. His-467 contacts L-aspartate. Glu-501 contributes to the ATP binding site. Arg-508 contacts L-aspartate. An ATP-binding site is contributed by 553–556; that stretch reads GLDR.

Belongs to the class-II aminoacyl-tRNA synthetase family. Type 1 subfamily. In terms of assembly, homodimer.

The protein localises to the cytoplasm. The enzyme catalyses tRNA(Asx) + L-aspartate + ATP = L-aspartyl-tRNA(Asx) + AMP + diphosphate. In terms of biological role, aspartyl-tRNA synthetase with relaxed tRNA specificity since it is able to aspartylate not only its cognate tRNA(Asp) but also tRNA(Asn). Reaction proceeds in two steps: L-aspartate is first activated by ATP to form Asp-AMP and then transferred to the acceptor end of tRNA(Asp/Asn). The sequence is that of Aspartate--tRNA(Asp/Asn) ligase from Albidiferax ferrireducens (strain ATCC BAA-621 / DSM 15236 / T118) (Rhodoferax ferrireducens).